Here is a 354-residue protein sequence, read N- to C-terminus: Anthranilate phosphoribosyltransferase (354 aa).

Residues Gly94, 97-98, Thr102, 104-107, 122-130, and Ser134 contribute to the 5-phospho-alpha-D-ribose 1-diphosphate site; these read GD, NIST, and KHGNRAASS. Residue Gly94 participates in anthranilate binding. Ser106 serves as a coordination point for Mg(2+). Asn125 provides a ligand contact to anthranilate. Anthranilate is bound at residue Arg180. 2 residues coordinate Mg(2+): Asp238 and Glu239.

It belongs to the anthranilate phosphoribosyltransferase family. As to quaternary structure, homodimer. Requires Mg(2+) as cofactor.

It carries out the reaction N-(5-phospho-beta-D-ribosyl)anthranilate + diphosphate = 5-phospho-alpha-D-ribose 1-diphosphate + anthranilate. Its pathway is amino-acid biosynthesis; L-tryptophan biosynthesis; L-tryptophan from chorismate: step 2/5. Its function is as follows. Catalyzes the transfer of the phosphoribosyl group of 5-phosphorylribose-1-pyrophosphate (PRPP) to anthranilate to yield N-(5'-phosphoribosyl)-anthranilate (PRA). The chain is Anthranilate phosphoribosyltransferase from Streptomyces avermitilis (strain ATCC 31267 / DSM 46492 / JCM 5070 / NBRC 14893 / NCIMB 12804 / NRRL 8165 / MA-4680).